A 260-amino-acid polypeptide reads, in one-letter code: Oxidoreductase macE (260 aa).

Belongs to the oxidoreductase OpS7 family.

The protein operates within secondary metabolite biosynthesis; terpenoid biosynthesis. Functionally, oxidoreductase; part of the gene cluster that mediates the biosynthesis of macrophorins, isoprenoid epoxycyclohexenones containing cyclized drimane moieties. The first step of the pathway is the synthesis of 6-methylsalicylic acid (6-MSA) by the polyketide synthase macA. 6-MSA is then converted to m-cresol by the decarboxylase macB. The cytochrome P450 monooxygenase macC then catalyzes the oxidation of m-cresol to toluquinol. Epoxidation of toluquinol is then performed by the short chain dehydrogenase macD, with the help of macE, and a further prenylation by macG leads to 7-deacetoxyyanuthone A. The next step is the hydroxylation of C-22 of 7-deacetoxyyanuthone A by the cytochrome P450 monooxygenase macH to yield 22-deacetylyanuthone A. O-Mevalon transferase macI then attaches mevalon to the hydroxyl group of 22-deacetylyanuthone A to produce yanuthone E. The terpene cyclase macJ catalyzes the cyclization of 22-deacetylyanuthone A to macrophorin A. MacJ is also able to catalyze cyclization of yanuthone E and 7-deacetoxyyanuthone A to their corresponding macrophorins. The macJ products can be further modified by macH and macJ, as well as by the FAD-dependent monooxygenase macF, to produce additional macrophorins, including 4'-oxomacrophorin A, 4'-oxomacrophorin D and 4'-oxomacrophorin E. This chain is Oxidoreductase macE, found in Penicillium terrestre.